The sequence spans 335 residues: 4-hydroxythreonine-4-phosphate dehydrogenase (335 aa).

Residues His135 and Thr136 each coordinate substrate. Residues His165, His210, and His265 each coordinate a divalent metal cation. Substrate-binding residues include Lys273, Asn282, and Arg291.

This sequence belongs to the PdxA family. In terms of assembly, homodimer. Requires Zn(2+) as cofactor. Mg(2+) is required as a cofactor. Co(2+) serves as cofactor.

It is found in the cytoplasm. The enzyme catalyses 4-(phosphooxy)-L-threonine + NAD(+) = 3-amino-2-oxopropyl phosphate + CO2 + NADH. It participates in cofactor biosynthesis; pyridoxine 5'-phosphate biosynthesis; pyridoxine 5'-phosphate from D-erythrose 4-phosphate: step 4/5. Catalyzes the NAD(P)-dependent oxidation of 4-(phosphooxy)-L-threonine (HTP) into 2-amino-3-oxo-4-(phosphooxy)butyric acid which spontaneously decarboxylates to form 3-amino-2-oxopropyl phosphate (AHAP). The protein is 4-hydroxythreonine-4-phosphate dehydrogenase of Saccharophagus degradans (strain 2-40 / ATCC 43961 / DSM 17024).